The primary structure comprises 565 residues: Sulfite reductase [NADPH] hemoprotein beta-component (565 aa).

C429, C435, C474, and C478 together coordinate [4Fe-4S] cluster. C478 contributes to the siroheme binding site.

This sequence belongs to the nitrite and sulfite reductase 4Fe-4S domain family. Alpha(8)-beta(8). The alpha component is a flavoprotein, the beta component is a hemoprotein. The cofactor is siroheme. [4Fe-4S] cluster is required as a cofactor.

The enzyme catalyses hydrogen sulfide + 3 NADP(+) + 3 H2O = sulfite + 3 NADPH + 4 H(+). It participates in sulfur metabolism; hydrogen sulfide biosynthesis; hydrogen sulfide from sulfite (NADPH route): step 1/1. Its function is as follows. Component of the sulfite reductase complex that catalyzes the 6-electron reduction of sulfite to sulfide. This is one of several activities required for the biosynthesis of L-cysteine from sulfate. This Shewanella putrefaciens (strain CN-32 / ATCC BAA-453) protein is Sulfite reductase [NADPH] hemoprotein beta-component.